The chain runs to 276 residues: 4-deoxy-L-threo-5-hexosulose-uronate ketol-isomerase (276 aa).

His-194, His-196, Glu-201, and His-243 together coordinate Zn(2+).

It belongs to the KduI family. It depends on Zn(2+) as a cofactor.

It carries out the reaction 5-dehydro-4-deoxy-D-glucuronate = 3-deoxy-D-glycero-2,5-hexodiulosonate. Its pathway is glycan metabolism; pectin degradation; 2-dehydro-3-deoxy-D-gluconate from pectin: step 4/5. Catalyzes the isomerization of 5-dehydro-4-deoxy-D-glucuronate to 3-deoxy-D-glycero-2,5-hexodiulosonate. This Caldicellulosiruptor bescii (strain ATCC BAA-1888 / DSM 6725 / KCTC 15123 / Z-1320) (Anaerocellum thermophilum) protein is 4-deoxy-L-threo-5-hexosulose-uronate ketol-isomerase.